Reading from the N-terminus, the 145-residue chain is Transcription antitermination protein NusB (145 aa).

Belongs to the NusB family.

Its function is as follows. Involved in transcription antitermination. Required for transcription of ribosomal RNA (rRNA) genes. Binds specifically to the boxA antiterminator sequence of the ribosomal RNA (rrn) operons. This is Transcription antitermination protein NusB from Burkholderia vietnamiensis (strain G4 / LMG 22486) (Burkholderia cepacia (strain R1808)).